The sequence spans 529 residues: Peptide chain release factor 3 (529 aa).

The 270-residue stretch at 11–280 (AKRRTFAIIS…GLVEWAPAPM (270 aa)) folds into the tr-type G domain. GTP contacts are provided by residues 20–27 (SHPDAGKT), 88–92 (DTPGH), and 142–145 (NKLD).

This sequence belongs to the TRAFAC class translation factor GTPase superfamily. Classic translation factor GTPase family. PrfC subfamily.

The protein localises to the cytoplasm. Increases the formation of ribosomal termination complexes and stimulates activities of RF-1 and RF-2. It binds guanine nucleotides and has strong preference for UGA stop codons. It may interact directly with the ribosome. The stimulation of RF-1 and RF-2 is significantly reduced by GTP and GDP, but not by GMP. This is Peptide chain release factor 3 from Shigella dysenteriae serotype 1 (strain Sd197).